A 401-amino-acid polypeptide reads, in one-letter code: Tryptophan synthase beta chain (401 aa).

Lys-91 is modified (N6-(pyridoxal phosphate)lysine).

It belongs to the TrpB family. In terms of assembly, tetramer of two alpha and two beta chains. Pyridoxal 5'-phosphate serves as cofactor.

It carries out the reaction (1S,2R)-1-C-(indol-3-yl)glycerol 3-phosphate + L-serine = D-glyceraldehyde 3-phosphate + L-tryptophan + H2O. It participates in amino-acid biosynthesis; L-tryptophan biosynthesis; L-tryptophan from chorismate: step 5/5. The beta subunit is responsible for the synthesis of L-tryptophan from indole and L-serine. This Lactococcus lactis subsp. cremoris (strain SK11) protein is Tryptophan synthase beta chain.